The primary structure comprises 275 residues: Thiazole synthase (275 aa).

Lys-116 functions as the Schiff-base intermediate with DXP in the catalytic mechanism. Residues Gly-177, 203–204 (AG), and 225–226 (NT) each bind 1-deoxy-D-xylulose 5-phosphate.

Belongs to the ThiG family. As to quaternary structure, homotetramer. Forms heterodimers with either ThiH or ThiS.

Its subcellular location is the cytoplasm. The catalysed reaction is [ThiS sulfur-carrier protein]-C-terminal-Gly-aminoethanethioate + 2-iminoacetate + 1-deoxy-D-xylulose 5-phosphate = [ThiS sulfur-carrier protein]-C-terminal Gly-Gly + 2-[(2R,5Z)-2-carboxy-4-methylthiazol-5(2H)-ylidene]ethyl phosphate + 2 H2O + H(+). It participates in cofactor biosynthesis; thiamine diphosphate biosynthesis. Catalyzes the rearrangement of 1-deoxy-D-xylulose 5-phosphate (DXP) to produce the thiazole phosphate moiety of thiamine. Sulfur is provided by the thiocarboxylate moiety of the carrier protein ThiS. In vitro, sulfur can be provided by H(2)S. This is Thiazole synthase from Acaryochloris marina (strain MBIC 11017).